Consider the following 237-residue polypeptide: Small ribosomal subunit protein uS3 (237 aa).

Residues 17-86 (VERHLGHELK…SPQIEVQQVD (70 aa)) enclose the KH type-2 domain.

The protein belongs to the universal ribosomal protein uS3 family. In terms of assembly, part of the 30S ribosomal subunit.

Binds the lower part of the 30S subunit head. This Methanospirillum hungatei JF-1 (strain ATCC 27890 / DSM 864 / NBRC 100397 / JF-1) protein is Small ribosomal subunit protein uS3.